A 175-amino-acid polypeptide reads, in one-letter code: Large ribosomal subunit protein uL6 (175 aa).

The protein belongs to the universal ribosomal protein uL6 family. Part of the 50S ribosomal subunit.

In terms of biological role, this protein binds to the 23S rRNA, and is important in its secondary structure. It is located near the subunit interface in the base of the L7/L12 stalk, and near the tRNA binding site of the peptidyltransferase center. This is Large ribosomal subunit protein uL6 from Xylella fastidiosa (strain M23).